A 171-amino-acid polypeptide reads, in one-letter code: Co-chaperone protein HscB (171 aa).

The 73-residue stretch at 2–74 (DYFTLFGLPA…LTRAEYLLSL (73 aa)) folds into the J domain.

It belongs to the HscB family. As to quaternary structure, interacts with HscA and stimulates its ATPase activity. Interacts with IscU.

In terms of biological role, co-chaperone involved in the maturation of iron-sulfur cluster-containing proteins. Seems to help targeting proteins to be folded toward HscA. This is Co-chaperone protein HscB from Klebsiella pneumoniae (strain 342).